Reading from the N-terminus, the 299-residue chain is Protein translocase subunit SecF (299 aa).

A run of 6 helical transmembrane segments spans residues 14–34, 142–162, 166–186, 193–213, 245–265, and 270–290; these read VLIVSAVLILVGLIYTFFYHG, IFLVLGTFILILIYITLRFKL, IASILSIFHDIFFIVAFLGVF, YIIVAILTIIGYSLNDTIIIF, LTSVTTFVAVFSIYVFTEGSI, and LVFMVGVIVGTYSSVFIASPI.

It belongs to the SecD/SecF family. SecF subfamily. Forms a complex with SecD. Part of the essential Sec protein translocation apparatus which comprises SecA, SecYEG and auxiliary proteins SecDF. Other proteins may also be involved.

The protein resides in the cell inner membrane. Part of the Sec protein translocase complex. Interacts with the SecYEG preprotein conducting channel. SecDF uses the proton motive force (PMF) to complete protein translocation after the ATP-dependent function of SecA. This is Protein translocase subunit SecF from Borreliella burgdorferi (strain ATCC 35210 / DSM 4680 / CIP 102532 / B31) (Borrelia burgdorferi).